Consider the following 514-residue polypeptide: MTTTKRPIALLILDGWGYRENTHMNAVYHANTPVLDRLNAQYAHGLISGSGLDVGLPDGQMGNSEVGHINLGSGRIVYQELTRISKAIADHEFEQNPALCDAVDAAVKTGGAVHIMGLLSPGGVHSHEEHIEAMCRMAVARGATKVYLHAFLDGRDTPPRSAKSSLSHFDDLFTTLGHGRIASIIGRYFAMDRDNRWDRVSQAYDLITQGKSKFQYDNAVTALEAAYSRDENDEFVSSSAITDANGQVATLQDGDALIFMNFRADRARQITRSFINPEFDGFARAVTPKVNFVTLTEYAADIKAPIAYPSDNLVNTLGEVLQNRGRTQLRISETEKYAHVTFFFNGGKEEPFNGEDRILINSPKVATYDLQPEMSSTELTDKLVAAIESTKYDVIICNYPNGDMVGHTGNFDAAVKACEAVDACIGRVVEALAKVGGECIITADHGNAEQMTDETTGQAHTAHTSELVPFVFVGRDATIDKGGKLSDVAPTILHLMGESIPAEMTGKPLIHVKE.

Residues aspartate 14 and serine 64 each contribute to the Mn(2+) site. Serine 64 serves as the catalytic Phosphoserine intermediate. Substrate is bound by residues histidine 125, 155–156, arginine 187, arginine 193, 263–266, and lysine 336; these read RD and RADR. 5 residues coordinate Mn(2+): aspartate 403, histidine 407, aspartate 444, histidine 445, and histidine 463.

The protein belongs to the BPG-independent phosphoglycerate mutase family. Monomer. It depends on Mn(2+) as a cofactor.

The enzyme catalyses (2R)-2-phosphoglycerate = (2R)-3-phosphoglycerate. It functions in the pathway carbohydrate degradation; glycolysis; pyruvate from D-glyceraldehyde 3-phosphate: step 3/5. Catalyzes the interconversion of 2-phosphoglycerate and 3-phosphoglycerate. The chain is 2,3-bisphosphoglycerate-independent phosphoglycerate mutase from Shewanella oneidensis (strain ATCC 700550 / JCM 31522 / CIP 106686 / LMG 19005 / NCIMB 14063 / MR-1).